Here is a 269-residue protein sequence, read N- to C-terminus: Putative pyruvate, phosphate dikinase regulatory protein (269 aa).

Position 153–160 (153–160 (GVSRTSKT)) interacts with ADP.

The protein belongs to the pyruvate, phosphate/water dikinase regulatory protein family. PDRP subfamily.

It catalyses the reaction N(tele)-phospho-L-histidyl/L-threonyl-[pyruvate, phosphate dikinase] + ADP = N(tele)-phospho-L-histidyl/O-phospho-L-threonyl-[pyruvate, phosphate dikinase] + AMP + H(+). The enzyme catalyses N(tele)-phospho-L-histidyl/O-phospho-L-threonyl-[pyruvate, phosphate dikinase] + phosphate + H(+) = N(tele)-phospho-L-histidyl/L-threonyl-[pyruvate, phosphate dikinase] + diphosphate. In terms of biological role, bifunctional serine/threonine kinase and phosphorylase involved in the regulation of the pyruvate, phosphate dikinase (PPDK) by catalyzing its phosphorylation/dephosphorylation. This chain is Putative pyruvate, phosphate dikinase regulatory protein, found in Pediococcus pentosaceus (strain ATCC 25745 / CCUG 21536 / LMG 10740 / 183-1w).